The following is an 86-amino-acid chain: Cell division topological specificity factor (86 aa).

The protein belongs to the MinE family.

Its function is as follows. Prevents the cell division inhibition by proteins MinC and MinD at internal division sites while permitting inhibition at polar sites. This ensures cell division at the proper site by restricting the formation of a division septum at the midpoint of the long axis of the cell. This chain is Cell division topological specificity factor, found in Photobacterium profundum (strain SS9).